Reading from the N-terminus, the 289-residue chain is Inorganic pyrophosphatase (289 aa).

Residue S2 is modified to N-acetylserine. The residue at position 57 (K57) is an N6-acetyllysine. Mg(2+) contacts are provided by D116, D121, and D153. An N6-acetyllysine modification is found at K228. S250 is subject to Phosphoserine.

This sequence belongs to the PPase family. In terms of assembly, homodimer. Mg(2+) is required as a cofactor.

Its subcellular location is the cytoplasm. The enzyme catalyses diphosphate + H2O = 2 phosphate + H(+). In Pongo abelii (Sumatran orangutan), this protein is Inorganic pyrophosphatase (PPA1).